The following is a 267-amino-acid chain: Thiamine pyrophosphokinase 2 (267 aa).

It belongs to the thiamine pyrophosphokinase family. In terms of tissue distribution, expressed in leaves and at lower levels in flowers.

The protein localises to the cytoplasm. Its subcellular location is the cytosol. The enzyme catalyses thiamine + ATP = thiamine diphosphate + AMP + H(+). The protein operates within cofactor biosynthesis; thiamine diphosphate biosynthesis; thiamine diphosphate from thiamine: step 1/1. In terms of biological role, catalyzes the phosphorylation of thiamine to thiamine pyrophosphate (TPP). TPP is an active cofactor for enzymes involved in glycolysis and energy production. Plant leaves require high levels of TPP for photosynthesis and carbohydrate metabolism. This chain is Thiamine pyrophosphokinase 2, found in Arabidopsis thaliana (Mouse-ear cress).